Here is a 739-residue protein sequence, read N- to C-terminus: Mitochondrial proton/calcium exchanger protein (739 aa).

The transit peptide at methionine 1–arginine 115 directs the protein to the mitochondrion. The stretch at arginine 115–glutamate 136 forms a coiled coil. The Mitochondrial intermembrane portion of the chain corresponds to aspartate 116–arginine 208. Threonine 192 is subject to Phosphothreonine; by PINK1. A helical membrane pass occupies residues leucine 209 to valine 229. The Mitochondrial matrix segment spans residues lysine 230–serine 739. The Letm1 RBD domain occupies lysine 252–glutamate 537. 2 coiled-coil regions span residues asparagine 462–glutamate 490 and glutamate 537–glutamate 627. Lysine 597 is modified (N6-acetyllysine). The 36-residue stretch at isoleucine 663–glutamate 698 folds into the EF-hand domain. Ca(2+) is bound by residues aspartate 676, asparagine 678, aspartate 680, lysine 682, and aspartate 687. Residues alanine 708–serine 739 are a coiled coil. The interval glutamate 718–serine 739 is disordered.

It belongs to the LETM1 family. As to quaternary structure, homohexamer. Can form 2 complexes: a major (300 kDa) and a minor complex (500-600 kDa). Interacts with BCS1L. Interacts with GHITM. Post-translationally, PINK1-mediated phosphorylation at Thr-192, positively regulates its mitochondrial calcium transport activity.

The protein localises to the mitochondrion inner membrane. The catalysed reaction is Ca(2+)(in) + 2 H(+)(out) = Ca(2+)(out) + 2 H(+)(in). It carries out the reaction K(+)(in) + H(+)(out) = K(+)(out) + H(+)(in). Inhibited by ruthenium red or its derivative Ru360. Plays an important role in maintenance of mitochondrial morphology and in mediating either calcium or potassium/proton antiport. Mediates proton-dependent calcium efflux from mitochondrion. Also functions as an electroneutral mitochondrial proton/potassium exchanger. Crucial for the maintenance of mitochondrial tubular networks and for the assembly of the supercomplexes of the respiratory chain. Required for the maintenance of the tubular shape and cristae organization. The chain is Mitochondrial proton/calcium exchanger protein from Homo sapiens (Human).